A 7785-amino-acid chain; its full sequence is Probable non-canonical nonribosomal peptide synthetase (NRPS) CymA (7785 aa).

Carrier domains are found at residues 487 to 562, 1908 to 1983, and 2958 to 3033; these read TARS…QRQE, HART…SEQQ, and SPGM…LEGG. An O-(pantetheine 4'-phosphoryl)serine mark is found at S522, S1943, and S2993. Residues 3088 to 3111 form an LRR 1 repeat; the sequence is RLALADVVVRHEALRTVFAERAGN. Carrier domains lie at 3978 to 4053, 5002 to 5077, and 6389 to 6464; these read APRT…SEQQ, EPRT…LEAN, and GPRD…AQGS. O-(pantetheine 4'-phosphoryl)serine is present on residues S4013, S5037, and S6424. Residues 6853 to 6875 form an LRR 2 repeat; it reads TGVSRVDLSVNAIETFDDHGLPA. The Carrier 7 domain occupies 7432–7507; the sequence is GPRTPQEEIL…QLAEQLGSDG (76 aa). S7467 carries the O-(pantetheine 4'-phosphoryl)serine modification.

It depends on pantetheine 4'-phosphate as a cofactor.

Its function is as follows. Probable non-canonical nonribosomal peptide synthetase (NRPS); part of the gene cluster that mediates the biosynthesis of cyclic heptapeptides, known as cyclomarins and also of cyclic dipeptides, called cyclomarazines, which have both antimicrobial and cytotoxic effects. First, CymD catalyzes the reverse N-prenylation of monomeric L-tryptophan with dimethylallyl diphosphate (DMAPP) to form N-(1,1-dimethylallyl)-tryptophan (r-N-DMAT). The N-(1,1-dimethylallyl)-tryptophan produced by CymD is then combined with a range of standard and nonproteinogenic amino acid substrates to synthesize the peptides, a process that is probably catalyzed by the non-canonical nonribosomal peptide synthetase (NRPS), CymA. Other proteins in the cluster catalyze further modifications of the peptides including CymV which catalyzes the oxidation of olefinic cyclomarins and cyclomarazines to their respective epoxide derivatives. The sequence is that of Probable non-canonical nonribosomal peptide synthetase (NRPS) CymA from Salinispora arenicola (strain CNS-205).